Reading from the N-terminus, the 480-residue chain is Cobyric acid synthase (480 aa).

The GATase cobBQ-type domain occupies 249–436; that stretch reads KLKVVVPVLT…LHGFLDSEAA (188 aa). Catalysis depends on Cys-330, which acts as the Nucleophile. His-428 is an active-site residue.

Belongs to the CobB/CobQ family. CobQ subfamily.

The protein operates within cofactor biosynthesis; adenosylcobalamin biosynthesis. Catalyzes amidations at positions B, D, E, and G on adenosylcobyrinic A,C-diamide. NH(2) groups are provided by glutamine, and one molecule of ATP is hydrogenolyzed for each amidation. In Vibrio vulnificus (strain YJ016), this protein is Cobyric acid synthase.